An 85-amino-acid chain; its full sequence is Protein Vpu (85 aa).

At 1–7 the chain is on the extracellular side; it reads MHQENLL. The helical transmembrane segment at 8–28 threads the bilayer; that stretch reads ALIALSALCLINVLIWLFNLR. Topologically, residues 29–85 are cytoplasmic; the sequence is IYLVQRKQDRREQEILERLRRIKEIRDDSDYESNEEEQQEVMELIHSHGFANPMFEL.

The protein belongs to the HIV-1 VPU protein family. As to quaternary structure, homopentamer. Interacts with host CD4 and BRTC; these interactions induce proteasomal degradation of CD4. Interacts with host BST2; this interaction leads to the degradation of host BST2. Interacts with host FBXW11. Interacts with host AP1M1; this interaction plays a role in the mistrafficking and subsequent degradation of host BST2. Interacts with host RANBP2; this interaction allows Vpu to down-regulate host BLM sumoylation. Phosphorylated by host CK2. This phosphorylation is necessary for interaction with human BTRC and degradation of CD4.

The protein resides in the host membrane. Ion channel activity is inhibited by hexamethylene amiloride in vitro. In terms of biological role, enhances virion budding by targeting host CD4 and Tetherin/BST2 to proteasome degradation. Degradation of CD4 prevents any unwanted premature interactions between viral Env and its host receptor CD4 in the endoplasmic reticulum. Degradation of antiretroviral protein Tetherin/BST2 is important for virion budding, as BST2 tethers new viral particles to the host cell membrane. Mechanistically, Vpu bridges either CD4 or BST2 to BTRC, a substrate recognition subunit of the Skp1/Cullin/F-box protein E3 ubiquitin ligase, induces their ubiquitination and subsequent proteasomal degradation. The alteration of the E3 ligase specificity by Vpu seems to promote the degradation of host IKBKB, leading to NF-kappa-B down-regulation and subsequent apoptosis. Acts as a viroporin that forms an oligomeric ion channel in membranes. Modulates the host DNA repair mechanisms to promote degradation of nuclear viral cDNA in cells that are already productively infected in order to suppress immune sensing and proviral hyper-integration (superinfection). Manipulates PML-NBs and modulates SUMOylation of host BLM protein thereby enhancing its DNA-end processing activity toward viral unintegrated linear DNA. Also inhibits RAD52-mediated homologous repair of viral cDNA, preventing the generation of dead-end circular forms of single copies of the long terminal repeat and permitting sustained nucleolytic attack. The protein is Protein Vpu of Human immunodeficiency virus type 1 group O (isolate MVP5180) (HIV-1).